Here is a 200-residue protein sequence, read N- to C-terminus: NAD(P)H-quinone oxidoreductase subunit 6, chloroplastic (200 aa).

The next 5 helical transmembrane spans lie at Ile13–Ser33, Ile35–Ala55, Ala64–Ile84, Ile102–Ser122, and Leu156–Ile176.

The protein belongs to the complex I subunit 6 family. NDH is composed of at least 16 different subunits, 5 of which are encoded in the nucleus.

The protein resides in the plastid. The protein localises to the chloroplast thylakoid membrane. The enzyme catalyses a plastoquinone + NADH + (n+1) H(+)(in) = a plastoquinol + NAD(+) + n H(+)(out). It carries out the reaction a plastoquinone + NADPH + (n+1) H(+)(in) = a plastoquinol + NADP(+) + n H(+)(out). In terms of biological role, NDH shuttles electrons from NAD(P)H:plastoquinone, via FMN and iron-sulfur (Fe-S) centers, to quinones in the photosynthetic chain and possibly in a chloroplast respiratory chain. The immediate electron acceptor for the enzyme in this species is believed to be plastoquinone. Couples the redox reaction to proton translocation, and thus conserves the redox energy in a proton gradient. The chain is NAD(P)H-quinone oxidoreductase subunit 6, chloroplastic (ndhG) from Physcomitrium patens (Spreading-leaved earth moss).